The sequence spans 81 residues: Photosystem I iron-sulfur center (81 aa).

4Fe-4S ferredoxin-type domains lie at 2–31 (SHTVKIYDTCIGCTQCVRACPTDVLEMVPW) and 39–68 (IASSPRTEDCVGCKRCETACPTDFLSIRVY). [4Fe-4S] cluster-binding residues include Cys-11, Cys-14, Cys-17, Cys-21, Cys-48, Cys-51, Cys-54, and Cys-58.

The cyanobacterial PSI reaction center is composed of one copy each of PsaA,B,C,D,E,F,I,J,K,L,M and X, and forms trimeric complexes. [4Fe-4S] cluster is required as a cofactor.

It is found in the cellular thylakoid membrane. It carries out the reaction reduced [plastocyanin] + hnu + oxidized [2Fe-2S]-[ferredoxin] = oxidized [plastocyanin] + reduced [2Fe-2S]-[ferredoxin]. Its function is as follows. Apoprotein for the two 4Fe-4S centers FA and FB of photosystem I (PSI); essential for photochemical activity. FB is the terminal electron acceptor of PSI, donating electrons to ferredoxin. The C-terminus interacts with PsaA/B/D and helps assemble the protein into the PSI complex. Required for binding of PsaD and PsaE to PSI. PSI is a plastocyanin/cytochrome c6-ferredoxin oxidoreductase, converting photonic excitation into a charge separation, which transfers an electron from the donor P700 chlorophyll pair to the spectroscopically characterized acceptors A0, A1, FX, FA and FB in turn. In Mastigocladus laminosus (Fischerella sp.), this protein is Photosystem I iron-sulfur center.